A 341-amino-acid polypeptide reads, in one-letter code: S-adenosylmethionine:tRNA ribosyltransferase-isomerase (341 aa).

The protein belongs to the QueA family. In terms of assembly, monomer.

It is found in the cytoplasm. It carries out the reaction 7-aminomethyl-7-carbaguanosine(34) in tRNA + S-adenosyl-L-methionine = epoxyqueuosine(34) in tRNA + adenine + L-methionine + 2 H(+). It participates in tRNA modification; tRNA-queuosine biosynthesis. In terms of biological role, transfers and isomerizes the ribose moiety from AdoMet to the 7-aminomethyl group of 7-deazaguanine (preQ1-tRNA) to give epoxyqueuosine (oQ-tRNA). The polypeptide is S-adenosylmethionine:tRNA ribosyltransferase-isomerase (Clostridium botulinum (strain Kyoto / Type A2)).